The chain runs to 348 residues: Glucokinase (348 aa).

14–19 (GDVGGS) contributes to the ATP binding site. The segment at 327–348 (SDPAPVAAPTHPRGGTAGDMHA) is disordered.

Belongs to the bacterial glucokinase family.

The protein localises to the cytoplasm. The catalysed reaction is D-glucose + ATP = D-glucose 6-phosphate + ADP + H(+). This chain is Glucokinase, found in Chromobacterium violaceum (strain ATCC 12472 / DSM 30191 / JCM 1249 / CCUG 213 / NBRC 12614 / NCIMB 9131 / NCTC 9757 / MK).